We begin with the raw amino-acid sequence, 248 residues long: tRNA (guanine-N(1)-)-methyltransferase (248 aa).

Residues Gly113 and 133–138 (VGDYVL) each bind S-adenosyl-L-methionine.

The protein belongs to the RNA methyltransferase TrmD family. In terms of assembly, homodimer.

Its subcellular location is the cytoplasm. It catalyses the reaction guanosine(37) in tRNA + S-adenosyl-L-methionine = N(1)-methylguanosine(37) in tRNA + S-adenosyl-L-homocysteine + H(+). Functionally, specifically methylates guanosine-37 in various tRNAs. The chain is tRNA (guanine-N(1)-)-methyltransferase from Shewanella sp. (strain ANA-3).